The following is a 565-amino-acid chain: Sulfite reductase [NADPH] hemoprotein beta-component (565 aa).

The [4Fe-4S] cluster site is built by C429, C435, C474, and C478. Residue C478 coordinates siroheme.

This sequence belongs to the nitrite and sulfite reductase 4Fe-4S domain family. As to quaternary structure, alpha(8)-beta(8). The alpha component is a flavoprotein, the beta component is a hemoprotein. It depends on siroheme as a cofactor. The cofactor is [4Fe-4S] cluster.

It carries out the reaction hydrogen sulfide + 3 NADP(+) + 3 H2O = sulfite + 3 NADPH + 4 H(+). It participates in sulfur metabolism; hydrogen sulfide biosynthesis; hydrogen sulfide from sulfite (NADPH route): step 1/1. Component of the sulfite reductase complex that catalyzes the 6-electron reduction of sulfite to sulfide. This is one of several activities required for the biosynthesis of L-cysteine from sulfate. The polypeptide is Sulfite reductase [NADPH] hemoprotein beta-component (Shewanella sp. (strain MR-7)).